The sequence spans 261 residues: uncharacterized protein (261 aa).

This is an uncharacterized protein from Bacillus subtilis (strain 168).